We begin with the raw amino-acid sequence, 473 residues long: Photosystem II CP43 reaction center protein (473 aa).

The propeptide occupies 1 to 14 (MKTLYSLRRFYPVE). An N-acetylthreonine modification is found at threonine 15. Threonine 15 carries the phosphothreonine modification. Transmembrane regions (helical) follow at residues 69–93 (LFEV…PHLA), 134–155 (LLGP…KDRN), 178–200 (KALY…RKIT), 255–275 (KPFA…LSYS), and 291–312 (WFNN…ASQA). Position 367 (glutamate 367) interacts with [CaMn4O5] cluster. The chain crosses the membrane as a helical span at residues 447-471 (RARAAAAGFEKGIDRDLEPVLSMTP).

This sequence belongs to the PsbB/PsbC family. PsbC subfamily. As to quaternary structure, PSII is composed of 1 copy each of membrane proteins PsbA, PsbB, PsbC, PsbD, PsbE, PsbF, PsbH, PsbI, PsbJ, PsbK, PsbL, PsbM, PsbT, PsbX, PsbY, PsbZ, Psb30/Ycf12, at least 3 peripheral proteins of the oxygen-evolving complex and a large number of cofactors. It forms dimeric complexes. It depends on Binds multiple chlorophylls and provides some of the ligands for the Ca-4Mn-5O cluster of the oxygen-evolving complex. It may also provide a ligand for a Cl- that is required for oxygen evolution. PSII binds additional chlorophylls, carotenoids and specific lipids. as a cofactor.

It localises to the plastid. The protein localises to the chloroplast thylakoid membrane. Its function is as follows. One of the components of the core complex of photosystem II (PSII). It binds chlorophyll and helps catalyze the primary light-induced photochemical processes of PSII. PSII is a light-driven water:plastoquinone oxidoreductase, using light energy to abstract electrons from H(2)O, generating O(2) and a proton gradient subsequently used for ATP formation. This Acorus calamus var. americanus (American sweet flag) protein is Photosystem II CP43 reaction center protein.